The following is a 329-amino-acid chain: GTPase Obg (329 aa).

The Obg domain maps to Met1 to Leu159. Residues Ala160 to Glu328 enclose the OBG-type G domain. ATP contacts are provided by residues Gly166–Ser173, Phe191–Ile195, Asp213–Gly216, Asn280–Glu283, and Ser309–Ile311. Ser173 and Thr193 together coordinate Mg(2+).

Belongs to the TRAFAC class OBG-HflX-like GTPase superfamily. OBG GTPase family. Monomer. Mg(2+) is required as a cofactor.

It is found in the cytoplasm. An essential GTPase which binds GTP, GDP and possibly (p)ppGpp with moderate affinity, with high nucleotide exchange rates and a fairly low GTP hydrolysis rate. Plays a role in control of the cell cycle, stress response, ribosome biogenesis and in those bacteria that undergo differentiation, in morphogenesis control. The sequence is that of GTPase Obg from Prochlorococcus marinus (strain SARG / CCMP1375 / SS120).